The primary structure comprises 360 residues: Flavone O-methyltransferase 1 (360 aa).

127-133 is a substrate binding site; it reads MNQDKVL. Positions 159–177 are substrate binding; that stretch reads AFEYHGTDPRFNRVFNEGM. Gly205, Asp228, Asp248, Met249, and Lys262 together coordinate S-adenosyl-L-methionine. The active-site Proton acceptor is His266.

Belongs to the class I-like SAM-binding methyltransferase superfamily. Cation-independent O-methyltransferase family. COMT subfamily. Homodimer.

Functionally, flavone-specific O-methyltransferase with a preference for flavones &gt; flavonols. Active with tricetin, luteolin, quercitin and eriodictyol. Very low activity with phenylpropanoids (5-hydroxyferulic acid and caffeic acid). Catalyzes the sequential O-methylation of tricetin via 3'-O-methyltricetin, 3',5'-O-methyltricetin to 3',4',5'-O-trimethyltricetin. This is Flavone O-methyltransferase 1 (OMT1) from Triticum aestivum (Wheat).